A 314-amino-acid polypeptide reads, in one-letter code: MPLEQRSQHCKPEEGLEARGEALGLVGAQAPATEEQQTASSSSTLVEVTLGEVPAADSPSPPHSPQGASSFSTTINYTLWRQSDEGSSNQEEEGPRMFPDLESEFQAAISRKMVELVHFLLLKYRAREPVTKAEMLESVLRNCQDFFPVIFSKASEYLQLVFGIEVVEVVPISHLYILVTCLGLSYDGLLGDNQVMPKTGLLIIVLAIIAIEGDCAPEEKIWEELSMLEVFEGREDSVFAHPRKLLMQDLVQENYLEYRQVPGSDPACYEFLWGPRALIETSYVKVLHHTLKIGGEPHISYPPLHERALREGEE.

Residues 1–20 show a composition bias toward basic and acidic residues; the sequence is MPLEQRSQHCKPEEGLEARG. Residues 1–69 are disordered; that stretch reads MPLEQRSQHC…SPPHSPQGAS (69 aa). Positions 21 to 44 are enriched in low complexity; sequence EALGLVGAQAPATEEQQTASSSST. The residue at position 64 (Ser64) is a Phosphoserine. One can recognise an MAGE domain in the interval 109–308; sequence ISRKMVELVH…ISYPPLHERA (200 aa).

As to quaternary structure, interacts with TRIM28 and UBE2H. Interacts with HDAC3. Interacts with PML (isoform PML-1, isoform PML-2, isoform PML-3, isoform PML-4 and isoform PML-5). Expressed in many tumors of several types, such as melanoma, head and neck squamous cell carcinoma, lung carcinoma and breast carcinoma, but not in normal tissues except for testes.

It is found in the nucleus. The protein localises to the PML body. Functionally, reduces p53/TP53 transactivation function through recruitment of HDAC3 to p53/TP53 transcription sites. Also represses p73/TP73 activity. Proposed to enhance ubiquitin ligase activity of RING-type zinc finger-containing E3 ubiquitin-protein ligases. In vitro enhances ubiquitin ligase activity of TRIM28 and stimulates p53/TP53 ubiquitination by TRIM28 potentially in presence of Ubl-conjugating enzyme UBE2H. Proposed to act through recruitment and/or stabilization of the Ubl-conjugating enzyme (E2) at the E3:substrate complex. May play a role in embryonal development and tumor transformation or aspects of tumor progression. In vitro promotes cell viability in melanoma cell lines. Antigen recognized on a melanoma by autologous cytolytic T-lymphocytes. Negatively regulates acetylation and sumoylation of PML and represses PML-induced p53/TP53 acetylation and activation. This is Melanoma-associated antigen 2 (MAGEA2) from Homo sapiens (Human).